The following is a 364-amino-acid chain: Thebaine 6-O-demethylase (364 aa).

The Fe2OG dioxygenase domain occupies 214 to 314 (GTQAMRMNYY…RLSIATFHDP (101 aa)). Y223 contributes to the 2-oxoglutarate binding site. Fe cation-binding residues include H238, D240, and H295. Positions 305 and 307 each coordinate 2-oxoglutarate.

The protein belongs to the iron/ascorbate-dependent oxidoreductase family. The cofactor is L-ascorbate. Fe cation is required as a cofactor. As to expression, mainly expressed in stems and leaves and, to a lower extent, in capsules and roots.

It carries out the reaction thebaine + 2-oxoglutarate + O2 = neopinone + formaldehyde + succinate + CO2. The enzyme catalyses oripavine + 2-oxoglutarate + O2 = neomorphinone + formaldehyde + succinate + CO2. The catalysed reaction is (S)-canadine + S-adenosyl-L-methionine = (S)-cis-N-methylcanadine + S-adenosyl-L-homocysteine. It catalyses the reaction thebaine + 2-oxoglutarate + O2 = 6-O-demethylthebaine + formaldehyde + succinate + CO2 + H(+). Its pathway is alkaloid biosynthesis; morphine biosynthesis. Its activity is regulated as follows. Moderate substrate inhibition. Not inhibited in vitro by acylcyclohexanediones. Non-heme dioxygenase involved in biosynthesis of morphinan-type benzylisoquinoline and opiate alkaloids natural products. Mediates the conversion of thebaine to neopinone. Also catalyzes, with lower efficiency, the 6-O-demethylation of oripavine to neomorphinone, which is converted spontaneously to morphinone. Supports dealkylation reactions such as O,O-demethylenation in the metabolism of protopine, benzo[c]phenanthridine, and rhoeadine alkaloids; cleaves a methylenedioxy bridge leaving two hydroxyl groups. Catalyzes the O-demethylation of methylenedioxy bridges on protopine alkaloids such as allocryptopine. No activity with (S)-reticuline, salutaridine, papaverine, (S)-corytuberine, (S)-scoulerine, pavine, noscapine or codeine. In Papaver somniferum (Opium poppy), this protein is Thebaine 6-O-demethylase.